The primary structure comprises 118 residues: Small ribosomal subunit protein uS13 (118 aa).

The interval 94 to 118 (SLPLRGQRTKTNARTRKGPRKPIKK) is disordered.

It belongs to the universal ribosomal protein uS13 family. As to quaternary structure, part of the 30S ribosomal subunit. Forms a loose heterodimer with protein S19. Forms two bridges to the 50S subunit in the 70S ribosome.

Located at the top of the head of the 30S subunit, it contacts several helices of the 16S rRNA. In the 70S ribosome it contacts the 23S rRNA (bridge B1a) and protein L5 of the 50S subunit (bridge B1b), connecting the 2 subunits; these bridges are implicated in subunit movement. Contacts the tRNAs in the A and P-sites. This Vibrio cholerae serotype O1 (strain ATCC 39315 / El Tor Inaba N16961) protein is Small ribosomal subunit protein uS13.